Reading from the N-terminus, the 148-residue chain is Ubiquitin conjugating enzyme E2 B (148 aa).

In terms of domain architecture, UBC core spans 2–148 (AAHKRLQKEI…AKEWTKKYAK (147 aa)). Cysteine 87 acts as the Glycyl thioester intermediate in catalysis.

This sequence belongs to the ubiquitin-conjugating enzyme family. In terms of assembly, interacts with mkkA (via F-box/WD40 repeat domains).

The enzyme catalyses S-ubiquitinyl-[E1 ubiquitin-activating enzyme]-L-cysteine + [E2 ubiquitin-conjugating enzyme]-L-cysteine = [E1 ubiquitin-activating enzyme]-L-cysteine + S-ubiquitinyl-[E2 ubiquitin-conjugating enzyme]-L-cysteine.. Its pathway is protein modification; protein ubiquitination. Functionally, involved in protein ubiquitination and degradation during development. Mediates protein ubiquitination at the mound and finger stage required for subsequent development and may be an essential component of the developmental transition between the induction of postaggregative gene expression and subsequent cell-type differentiation and morphogenesis. ubcB and ubpB differentially control ubiquitination/deubiquitination and degradation of mkkA protein in a cell-type-specific and temporally regulated manner. This chain is Ubiquitin conjugating enzyme E2 B (ubcB), found in Dictyostelium discoideum (Social amoeba).